The chain runs to 400 residues: Capsid protein (400 aa).

A compositionally biased stretch (polar residues) spans 1-10 (MDPNLDQDTL). Positions 1 to 54 (MDPNLDQDTLPTHEEIDNDVDSAEEEPPEPPLLPDDIDDDDSHGSRTRRQVKPP) are disordered. Residues 16–28 (IDNDVDSAEEEPP) show a composition bias toward acidic residues.

This sequence belongs to the potexvirus capsid protein family.

Its subcellular location is the virion. Its function is as follows. Required for genome encapsidation. The polypeptide is Capsid protein (ORF3) (Botryotinia fuckeliana (Noble rot fungus)).